A 252-amino-acid chain; its full sequence is PF03932 family protein CutC (252 aa).

The protein belongs to the CutC family.

The protein resides in the cytoplasm. This is PF03932 family protein CutC from Serratia proteamaculans (strain 568).